A 93-amino-acid polypeptide reads, in one-letter code: Small ribosomal subunit protein uS19 (93 aa).

Positions 73 to 93 (EFSPTRTYRGHDKKDKKIQKK) are disordered.

Belongs to the universal ribosomal protein uS19 family.

Its function is as follows. Protein S19 forms a complex with S13 that binds strongly to the 16S ribosomal RNA. In Phytoplasma mali (strain AT), this protein is Small ribosomal subunit protein uS19.